A 354-amino-acid polypeptide reads, in one-letter code: Carbonic anhydrase 12 (354 aa).

Residues 1-24 (MPRRSLHAAAVLLLVILKEQPSSP) form the signal peptide. Topologically, residues 25 to 301 (APVNGSKWTY…VQVCTAAGLS (277 aa)) are extracellular. N-linked (GlcNAc...) asparagine glycans are attached at residues Asn-28 and Asn-80. Residues 30-289 (SKWTYFGPDG…FDERLVYTSF (260 aa)) form the Alpha-carbonic anhydrase domain. The cysteines at positions 50 and 230 are disulfide-linked. His-94 functions as the Proton donor/acceptor in the catalytic mechanism. The Zn(2+) site is built by His-119, His-121, and His-145. An N-linked (GlcNAc...) asparagine glycan is attached at Asn-162. 226 to 227 (TT) is a substrate binding site. The helical transmembrane segment at 302-322 (LGIILSLALAGILGICIVVVV) threads the bilayer. At 323-354 (SIWLFRRKSIKKGDNKGVIYKPATKMETEAHA) the chain is on the cytoplasmic side.

The protein belongs to the alpha-carbonic anhydrase family. In terms of assembly, homodimer. Requires Zn(2+) as cofactor. In terms of tissue distribution, highly expressed in colon, kidney, prostate, intestine and activated lymphocytes. Expressed at much higher levels in the renal cell cancers than in surrounding normal kidney tissue. Moderately expressed in pancreas, ovary and testis. Expressed in sweat glands and bronchiolar epithelium.

Its subcellular location is the membrane. The protein localises to the cell membrane. It catalyses the reaction hydrogencarbonate + H(+) = CO2 + H2O. With respect to regulation, inhibited by coumarins, saccharin, sulfonamide derivatives such as acetazolamide (AZA), benzenesulfonamide and derivatives (4-carboxyethylbenzene-sulfonamide, 4-carboxyethylbenzene-sulfonamide ethyl ester, 4-(acetyl-2-aminoethyl)benzene-sulfonamide, 4-aminoethylbenzene-sulfonamide) and Foscarnet (phosphonoformate trisodium salt). Functionally, reversible hydration of carbon dioxide. The sequence is that of Carbonic anhydrase 12 from Homo sapiens (Human).